Reading from the N-terminus, the 459-residue chain is Mitochondrial distribution and morphology protein 34 (459 aa).

Residues 1–190 (MSFRFNEAVF…LPSLIFNTSQ (190 aa)) form the SMP-LTD domain. Positions 338–347 (RSNSNDDNAK) are enriched in basic and acidic residues. Residues 338–375 (RSNSNDDNAKPRRRKIKCKKTRTPSNLQSQGEQAVDDS) form a disordered region. The segment covering 348 to 359 (PRRRKIKCKKTR) has biased composition (basic residues).

Belongs to the MDM34 family. As to quaternary structure, component of the ER-mitochondria encounter structure (ERMES) or MDM complex, composed of MMM1, MDM10, MDM12 and MDM34. Post-translationally, ubiquitinated by a SCF (SKP1-CUL1-F-box protein) E3 ubiquitin-protein ligase complex containing the F-box protein MDM30. Ubiquitination is important for mitochondrial integrity.

It localises to the mitochondrion outer membrane. Its function is as follows. Component of the ERMES/MDM complex, which serves as a molecular tether to connect the endoplasmic reticulum (ER) and mitochondria. Components of this complex are involved in the control of mitochondrial shape and protein biogenesis, and function in nonvesicular lipid trafficking between the ER and mitochondria. MDM34 is required for the interaction of the ER-resident membrane protein MMM1 and the outer mitochondrial membrane-resident beta-barrel protein MDM10. The protein is Mitochondrial distribution and morphology protein 34 of Saccharomyces cerevisiae (strain AWRI1631) (Baker's yeast).